The chain runs to 143 residues: Large-conductance mechanosensitive channel (143 aa).

Helical transmembrane passes span phenylalanine 10 to glycine 30, valine 40 to valine 60, and glycine 86 to valine 106.

It belongs to the MscL family. Homopentamer.

Its subcellular location is the cell inner membrane. Its function is as follows. Channel that opens in response to stretch forces in the membrane lipid bilayer. May participate in the regulation of osmotic pressure changes within the cell. This Paracidovorax citrulli (strain AAC00-1) (Acidovorax citrulli) protein is Large-conductance mechanosensitive channel.